The chain runs to 433 residues: NADH-quinone oxidoreductase subunit D (433 aa).

The protein belongs to the complex I 49 kDa subunit family. NDH-1 is composed of 14 different subunits. Subunits NuoB, C, D, E, F, and G constitute the peripheral sector of the complex.

The protein resides in the cell membrane. It catalyses the reaction a quinone + NADH + 5 H(+)(in) = a quinol + NAD(+) + 4 H(+)(out). In terms of biological role, NDH-1 shuttles electrons from NADH, via FMN and iron-sulfur (Fe-S) centers, to quinones in the respiratory chain. The immediate electron acceptor for the enzyme in this species is believed to be a menaquinone. Couples the redox reaction to proton translocation (for every two electrons transferred, four hydrogen ions are translocated across the cytoplasmic membrane), and thus conserves the redox energy in a proton gradient. The polypeptide is NADH-quinone oxidoreductase subunit D (Cutibacterium acnes (strain DSM 16379 / KPA171202) (Propionibacterium acnes)).